Consider the following 653-residue polypeptide: Rab11 family-interacting protein 5 (653 aa).

The C2 domain maps to 5–146; sequence RGAEPAAGPS…AGRAQHTQWY (142 aa). A phosphoserine mark is found at serine 176, serine 283, serine 286, serine 307, serine 357, and serine 367. The segment at 269–300 is disordered; it reads GPGAELLTRSPSRSSWLSTEGGRDSAQSPKLF. Residues 277–286 are compositionally biased toward polar residues; that stretch reads RSPSRSSWLS. 2 disordered regions span residues 342–402 and 415–548; these read HIYN…AVLG and PGAS…RSSL. The segment covering 357 to 368 has biased composition (low complexity); it reads SISGSLPSSGSL. The segment covering 375-387 has biased composition (basic and acidic residues); it reads FSEEGPRSTDDTW. Phosphoserine occurs at positions 391 and 395. Composition is skewed to basic and acidic residues over residues 420–430 and 447–460; these read PGEEEGARLPE and VAEKEGARKEERKP. Residues serine 494, serine 538, serine 547, and serine 553 each carry the phosphoserine modification. One can recognise an FIP-RBD domain in the interval 586-648; the sequence is KDSAVLDQSA…ETSPTLLQIP (63 aa).

As to quaternary structure, interacts with RAB11FIP4. Interacts with NAPG. Interacts with RO60. Interacts with RAB11A that has been activated by GTP binding. In terms of assembly, (Microbial infection) Interacts with Kaposi's sarcoma-associated herpesvirus/HHV-8 protein ORF45; this interaction results in the lysosomal degradation of ORF45 and the inhibition of viral particle release. Phosphorylated on serine and threonine residues. Phosphorylation at Ser-357 is PKA-dependent. Detected at low levels in heart, brain, placenta, lung, liver, adipocytes, kidney, spleen, skeletal muscle and pancreas.

The protein localises to the cytoplasm. It localises to the recycling endosome membrane. Its subcellular location is the early endosome membrane. The protein resides in the golgi apparatus membrane. It is found in the cytoplasmic vesicle. The protein localises to the secretory vesicle membrane. It localises to the mitochondrion membrane. In terms of biological role, rab effector involved in protein trafficking from apical recycling endosomes to the apical plasma membrane. Involved in insulin granule exocytosis. May regulate V-ATPase intracellular transport in response to extracellular acidosis. The polypeptide is Rab11 family-interacting protein 5 (Homo sapiens (Human)).